Reading from the N-terminus, the 447-residue chain is FAD-dependent monooxygenase tropB (447 aa).

A helical transmembrane segment spans residues 12–32 (PLSVGIVGGGIIGVILAAGLV). 3 residues coordinate FAD: Glu42, Ala55, and Arg124. Asn153 carries an N-linked (GlcNAc...) asparagine glycan. Active-site residues include Arg206 and Tyr239. N-linked (GlcNAc...) asparagine glycosylation is present at Asn243. FAD contacts are provided by Asp322 and Ala335.

It belongs to the paxM FAD-dependent monooxygenase family. It depends on FAD as a cofactor.

Its subcellular location is the membrane. It participates in secondary metabolite biosynthesis. Its function is as follows. FAD-dependent monooxygenase; part of the gene cluster that mediates the biosynthesis of the tropolone class of fungal maleic anhydrides. Within the pathway, tropB catalyzes a synthetically challenging asymmetric oxidative dearomatization reaction to convert 3-methylorcinaldehyde into a hydroxycyclohexadione. The pathway begins with the synthesis of 3-methylorcinaldehyde by the non-reducing polyketide synthase (PKS) tropA. 3-methylorcinaldehyde is the substrate for the FAD-dependent monooxygenase tropB to yield a dearomatized hydroxycyclohexadione. The 2-oxoglutarate-dependent dioxygenase tropC then performs the oxidative ring expansion to provide the first tropolone metabolite stipitaldehyde. Trop D converts stipitaldehyde into stipitacetal which is in turn converted to stipitalide by the short-chain dehydrogenase/reductase tropE. The next steps involve tropF, tropG, tropH, tropI and tropJ to form successive tropolone maleic anhydrides including stipitaldehydic, stipitatonic and stipitatic acids. This is FAD-dependent monooxygenase tropB from Talaromyces stipitatus (strain ATCC 10500 / CBS 375.48 / QM 6759 / NRRL 1006) (Penicillium stipitatum).